Consider the following 766-residue polypeptide: Semaphorin-4E (766 aa).

Residues 1–24 (MMSLLAVLCVLYVWSPAMLTGGLG) form the signal peptide. The Extracellular segment spans residues 25–664 (STLDSLPRKT…LHHVKEKERT (640 aa)). One can recognise a Sema domain in the interval 27-499 (LDSLPRKTVP…SEVGVVQLSI (473 aa)). Asparagine 52 carries N-linked (GlcNAc...) asparagine glycosylation. Cystine bridges form between cysteine 100-cysteine 111, cysteine 129-cysteine 138, cysteine 261-cysteine 373, and cysteine 285-cysteine 329. Asparagine 433 carries an N-linked (GlcNAc...) asparagine glycan. A PSI domain is found at 501-552 (ECGRYQTCLDCVLARDPHCGWDLDTEHCATINSIHRTRSSTVIQSLNDGDAS). 2 disulfide bridges follow: cysteine 502–cysteine 519 and cysteine 511–cysteine 528. The Ig-like C2-type domain maps to 555 to 640 (PAIGVSKPVN…QRKYQTQHVA (86 aa)). Asparagine 564 and asparagine 612 each carry an N-linked (GlcNAc...) asparagine glycan. Residues cysteine 577 and cysteine 623 are joined by a disulfide bond. The helical transmembrane segment at 665-685 (LVAMVVILSLVLAALLIWNLY) threads the bilayer. Over 686–766 (KGHLSLPCLH…LKYIDDESEI (81 aa)) the chain is Cytoplasmic. The interval 724–750 (FNSNNNHANDQRYSSSRETDRLSTTAG) is disordered.

The protein belongs to the semaphorin family.

It localises to the membrane. This is Semaphorin-4E (sema4e) from Danio rerio (Zebrafish).